Reading from the N-terminus, the 405-residue chain is Imidazolonepropionase (405 aa).

Fe(3+) is bound by residues His-73 and His-75. His-73 and His-75 together coordinate Zn(2+). 4-imidazolone-5-propanoate-binding residues include Arg-82, Tyr-145, and His-178. Tyr-145 contributes to the N-formimidoyl-L-glutamate binding site. His-243 is a Fe(3+) binding site. His-243 contacts Zn(2+). Gln-246 provides a ligand contact to 4-imidazolone-5-propanoate. Fe(3+) is bound at residue Asp-318. Residue Asp-318 participates in Zn(2+) binding. N-formimidoyl-L-glutamate contacts are provided by Asn-320 and Gly-322. Thr-323 is a binding site for 4-imidazolone-5-propanoate.

This sequence belongs to the metallo-dependent hydrolases superfamily. HutI family. It depends on Zn(2+) as a cofactor. Fe(3+) serves as cofactor.

It is found in the cytoplasm. It catalyses the reaction 4-imidazolone-5-propanoate + H2O = N-formimidoyl-L-glutamate. It functions in the pathway amino-acid degradation; L-histidine degradation into L-glutamate; N-formimidoyl-L-glutamate from L-histidine: step 3/3. In terms of biological role, catalyzes the hydrolytic cleavage of the carbon-nitrogen bond in imidazolone-5-propanoate to yield N-formimidoyl-L-glutamate. It is the third step in the universal histidine degradation pathway. The sequence is that of Imidazolonepropionase from Brucella suis (strain ATCC 23445 / NCTC 10510).